The following is a 283-amino-acid chain: Myeloid differentiation primary response protein MyD88-A (283 aa).

A Death domain is found at R27 to I105. The segment at E106–G143 is intermediate domain. Residues E147–L281 enclose the TIR domain.

It localises to the cytoplasm. Functionally, adapter protein involved in the Toll-like receptor and IL-1 receptor signaling pathway in the innate immune response. Activates expression of target genes in the Spemann organizer region during early embryonic development. Is required for normal axis formation. The chain is Myeloid differentiation primary response protein MyD88-A (myd88-a) from Xenopus laevis (African clawed frog).